Here is a 1217-residue protein sequence, read N- to C-terminus: Splicing factor 3B subunit 3 (1217 aa).

Interaction with PHF5A, SF3B1 and SF3B5 stretches follow at residues 105–119 and 145–168; these read ETFG…VPGQ and NRDA…TLVY. Residue Ser-156 is modified to Phosphoserine. Interaction with SF3B1 and SF3B5 stretches follow at residues 193–231 and 786–804; these read DNDP…LEEH and RKFV…ETDH. The segment at 1028-1049 is interaction with SF3B1; it reads TYPRWVTTASLLDYDTVAGADK. The tract at residues 1100–1123 is interaction with SF3B5; the sequence is TVLSLQKTTLIPGGSESLVYTTLS. Thr-1200 bears the Phosphothreonine mark.

The protein belongs to the RSE1 family. In terms of assembly, component of the 17S U2 SnRNP complex, a ribonucleoprotein complex that contains small nuclear RNA (snRNA) U2 and a number of specific proteins. Part of the SF3B subcomplex of the 17S U2 SnRNP complex. SF3B associates with the splicing subcomplex SF3A and a 12S RNA unit to form the U2 small nuclear ribonucleoproteins complex (U2 snRNP). Within the SF3B subcomplex, interacts directly with SF3B1 (via HEAT domain), SF3B5 and PHF5A. Identified in the spliceosome A complex; remains associated with the spliceosome throughout the splicing process. Component of the spliceosome B complex. Identified in the spliceosome C complex. Identified in the spliceosome E complex. Component of the minor (U12-type spliceosome) spliceosome. Within this complex, interacts with SCNM1. Associates with the STAGA transcription coactivator-HAT complex. Interacts with SUPT3H. Interacts with TAF3.

It is found in the nucleus. In terms of biological role, component of the 17S U2 SnRNP complex of the spliceosome, a large ribonucleoprotein complex that removes introns from transcribed pre-mRNAs. The 17S U2 SnRNP complex (1) directly participates in early spliceosome assembly and (2) mediates recognition of the intron branch site during pre-mRNA splicing by promoting the selection of the pre-mRNA branch-site adenosine, the nucleophile for the first step of splicing. Within the 17S U2 SnRNP complex, SF3B3 is part of the SF3B subcomplex, which is required for 'A' complex assembly formed by the stable binding of U2 snRNP to the branchpoint sequence in pre-mRNA. Sequence independent binding of SF3A and SF3B subcomplexes upstream of the branch site is essential, it may anchor U2 snRNP to the pre-mRNA. May also be involved in the assembly of the 'E' complex. Also acts as a component of the minor spliceosome, which is involved in the splicing of U12-type introns in pre-mRNAs. The protein is Splicing factor 3B subunit 3 (SF3B3) of Pongo abelii (Sumatran orangutan).